The following is a 242-amino-acid chain: Lactate utilization protein A 1 (242 aa).

It belongs to the LutA/YkgE family.

Is involved in L-lactate degradation and allows cells to grow with lactate as the sole carbon source. In Bacillus anthracis (strain CDC 684 / NRRL 3495), this protein is Lactate utilization protein A 1.